The primary structure comprises 135 residues: Large ribosomal subunit protein uL16c (135 aa).

It belongs to the universal ribosomal protein uL16 family. As to quaternary structure, part of the 50S ribosomal subunit.

Its subcellular location is the plastid. The protein localises to the chloroplast. The sequence is that of Large ribosomal subunit protein uL16c from Oenothera argillicola (Appalachian evening primrose).